A 205-amino-acid polypeptide reads, in one-letter code: NADH dehydrogenase (205 aa).

FMN-binding positions include 17–21, Q73, 158–159, and R195; these read RRSIR and LG.

Belongs to the nitroreductase family. In terms of assembly, homodimer. The cofactor is FMN.

The catalysed reaction is a ubiquinone + NADH + 5 H(+)(in) = a ubiquinol + NAD(+) + 4 H(+)(out). Can oxidize either NADH or NADPH with a preference for NADH. Can catalyze electron transfer from NADH to various electron acceptors which include, in addition to molecular oxygen, cytochrome c, 2,6 dichlorphenolindophenol, methylene blue, ferricyanide or P-nitroblue tetrazolium. The polypeptide is NADH dehydrogenase (nox) (Thermus thermophilus (strain ATCC 27634 / DSM 579 / HB8)).